A 775-amino-acid chain; its full sequence is Homoaconitase, mitochondrial (775 aa).

A mitochondrion-targeting transit peptide spans 1–29 (MQSRLMPSGGPGRRWAFLRVPSTPQRRAF). Positions 392, 461, and 464 each coordinate [4Fe-4S] cluster.

This sequence belongs to the aconitase/IPM isomerase family. Requires [4Fe-4S] cluster as cofactor.

It is found in the mitochondrion. The enzyme catalyses (2R,3S)-homoisocitrate = cis-homoaconitate + H2O. It functions in the pathway amino-acid biosynthesis; L-lysine biosynthesis via AAA pathway; L-alpha-aminoadipate from 2-oxoglutarate: step 3/5. Its function is as follows. Catalyzes the reversible hydration of cis-homoaconitate to (2R,3S)-homoisocitrate, a step in the alpha-aminoadipate pathway for lysine biosynthesis. This Aspergillus oryzae (strain ATCC 42149 / RIB 40) (Yellow koji mold) protein is Homoaconitase, mitochondrial (lys4).